A 396-amino-acid polypeptide reads, in one-letter code: MIISAASDYRAAAQRILPPFLFHYMDGGAYSEYTLRRNVEDLSEVALRQRILKNMSDLSLETTLFNEKLSMPVALAPVGLCGMYARRGEVQAAKAADTHGIPFTLSTVSVCPIEEVAPAIKRPMWFQLYVLRDRGFMRNALERAKAAGCSTLVFTVDMPTPGARYRDAHSGMSGPNAAMRRYLQAVTHPQWAWDVGLNGRPHDLGNISAYLGKPTGLEDYIGWLGNNFDPSISWKDLEWIRDFWDGPMVIKGILDPEDARDAVRFGADGIVVSNHGGRQLDGVLSSARALPAIADAVKGDIAILADSGIRNGLDVVRMIALGADTVLLGRAFLYALATAGQAGVANLLNLIEKEMKVAMTLTGAKSISEITQDSLVQGLGKELPAALAPMAKGNAA.

Residues Met-1 to Gly-380 form the FMN hydroxy acid dehydrogenase domain. Residue Tyr-24 participates in substrate binding. FMN-binding residues include Ser-106 and Gln-127. Substrate is bound at residue Tyr-129. Thr-155 lines the FMN pocket. Arg-164 provides a ligand contact to substrate. An FMN-binding site is contributed by Lys-251. His-275 functions as the Proton acceptor in the catalytic mechanism. Arg-278 contacts substrate. Asp-306–Arg-330 serves as a coordination point for FMN.

Belongs to the FMN-dependent alpha-hydroxy acid dehydrogenase family. FMN serves as cofactor.

The protein resides in the cell inner membrane. It carries out the reaction (S)-lactate + A = pyruvate + AH2. Functionally, catalyzes the conversion of L-lactate to pyruvate. Is coupled to the respiratory chain. In Shigella boydii serotype 4 (strain Sb227), this protein is L-lactate dehydrogenase.